Here is an 89-residue protein sequence, read N- to C-terminus: Strongylocin 2 (89 aa).

An N-terminal signal peptide occupies residues 1–22 (MNIRTASFTFIVVMMILSQTMA). The propeptide occupies 23-38 (DRFFNEPEEDDHLVES). W39 is subject to 6'-bromotryptophan.

Contains 3 disulfide bonds.

Functionally, has antimicrobial activity against Gram-negative bacteria and Gram-positive bacteria with minimum inhibitory concentration (MIC) between 0.78 uM and 3.13 uM. This Echinus esculentus (Sea urchin) protein is Strongylocin 2.